Consider the following 137-residue polypeptide: Large ribosomal subunit protein uL16c (137 aa).

Belongs to the universal ribosomal protein uL16 family. In terms of assembly, part of the 50S ribosomal subunit.

It localises to the plastid. Its subcellular location is the chloroplast. The sequence is that of Large ribosomal subunit protein uL16c from Trieres chinensis (Marine centric diatom).